Consider the following 1231-residue polypeptide: MAAALGAGGGAGAGDDDFDQFDKPGAERSWRRRAADEDWDSELEDDLLGEDLLSGKKNQSDLSDEELNDDLLQSDNEEEENFSSQGVTISLNTTSGIVTSFELSDNTNDQSGEQESEYEQGDDELAYHKPEEQELYTQEYPEEGQYEGHDAELTEDQIEYGDEPEEEQLYSDEVLDIEINEPLDEFTDEEYLQAYGGQQGLQVREDCEAEDDLDEITDSQVASETHEGGMETLELQKDIKEESDEEDDDDEESGRLRFKTERKEGTIIRLSDVTRERRNIPETLELSAEAKAALLEFEERERQHKQGRYGSRRGGRRGGSLMCRGMGDQRRDNSERGRMKEHRPALLPTQPSVVAHSPRLIPPPQPQPPPPPPPPPPQQQPIRSLFQQQQLQPLLPLQHPHHPSPPQGVHMPPQIETPRMMLTPPPVTPQQPKNIHINPHFKGTVVTPVQVPLLPVPSQPRPAVGPQRFPGPPEFPQHTPGPVPNSFNQPPRLPLQDQWRAPPPPQERDPFFLGVSGEPRFPSHLFLEQRSPPPPPPPPTLLNSSHPVPTQSPLPFTQPGPAFNQQGQQPVFPRERPVRPALQPPGPVGILHFSQPGSATARPFIPPRQPFLPSPGQPFLPTHAQPNLQGPLHPPLPPPHQPQPQPQQPQQQPQHHQHQPPLQPPLQPPHQPPPQHQPPPQHQPQQHQHHHHLSAPPPPLMPMSQPQFRPHVQTAQPQPSSSRMQCTPHQGLRHNAASQNISKRPMQQMQPTAPRNSNLRELPIAPSHVLEMSGNRCSSTPVAQVKSIVNTSPPCRAVVSSRSSQGNTDAKAKPLSPEAQPKEEAKPEAEFPDEDEETRLYRLKIEEQKRLREEILKQKELRRQQQAGARKKELLERLAQQQQQQQQQQHQPQQQQQQPQQIYGSQTSMEQEELAATPSPTNGNPLLPFPGAQCRQNVKTRLLVKNQDITTASVQPKAVNFVPPGANVQHQGQHLRPLKHLRQLPHKVLQVKPMDMEETPHSPQAARVTSLQGRPQDTKPGVKRTVMHRANSGGGGDGPHVSSKVRVIKLSGGQGGESDGFSHTEGQPQRLPQPPDMRQQPTRKVTLTKGVPQQPQHLPVGPHMYPAIPPGIKSIQGIHPAKKAIMHGRGRGVAGPMGRGRLMPNKQNLRVVECKPQPCVVSVEGLSSSTTDVQLKSLLMSVGPIQSLQMLPQQRKAIAKFKEPAHALAFQQKFHRHMIDLSHINVALIVE.

The span at Met1–Ala13 shows a compositional bias: gly residues. Disordered stretches follow at residues Met1–Gln168 and Ser219–Glu261. Position 2 is an N-acetylalanine (Ala2). Over residues Gln20–Asp36 the composition is skewed to basic and acidic residues. Residues Glu37–Gly49 are compositionally biased toward acidic residues. Ser41 carries the post-translational modification Phosphoserine. The segment covering Phe82–Asn108 has biased composition (polar residues). Acidic residues-rich tracts occupy residues Gly112–Glu124 and Leu153–Gln168. Residues Glu224–Lys240 show a composition bias toward basic and acidic residues. A compositionally biased stretch (acidic residues) spans Glu241–Glu252. Ser243 and Ser271 each carry phosphoserine. Disordered stretches follow at residues Phe297–His436 and Pro452–Glu761. A compositionally biased stretch (basic residues) spans Lys305 to Arg316. Basic and acidic residues predominate over residues Gly327–Pro344. Over residues Leu360–Gln379 the composition is skewed to pro residues. Positions Gln380–Gln398 are enriched in low complexity. The segment covering Phe469–Val483 has biased composition (pro residues). Asymmetric dimethylarginine is present on Arg520. Composition is skewed to pro residues over residues Ser531 to Thr540, Phe604 to Pro618, Leu632 to Gln647, and Pro661 to His682. Polar residues-rich tracts occupy residues Gln713 to Pro728 and Ala736 to Leu759. Phosphoserine is present on residues Ser792 and Ser816. Disordered stretches follow at residues Arg796–Leu840, Glu876–Ala932, and Glu998–Gln1080. Residues Gln820 to Ala829 show a composition bias toward basic and acidic residues. Residues Leu840–Gln891 are a coiled coil. Residues Gln880 to Gln901 are compositionally biased toward low complexity. Phosphoserine is present on residues Ser1002 and Ser1010. A Glycyl lysine isopeptide (Lys-Gly) (interchain with G-Cter in SUMO2) cross-link involves residue Lys1019. 2 positions are modified to phosphoserine: Ser1032 and Ser1051.

As to quaternary structure, associates with the NXF1-NXT1 RNA export complex. Interacts with ALKBH5; facilitating ALKBH5 recruitment to m6A-containing transcripts. Interacts with SENP1; promoting ALKBH5 deSUMOylation and subsequent activation.

It localises to the nucleus. Its subcellular location is the cytoplasm. Its function is as follows. RNA reader protein, which recognizes and binds specific RNAs, thereby regulating RNA metabolic processes, such as mRNA export, mRNA stability and/or translation. Binds a subset of intronless RNAs containing GC-rich elements, such as NORAD, and promotes their nuclear export by recruiting target RNAs to components of the NXF1-NXT1 RNA export machinery. Specifically recognizes and binds N6-methyladenosine (m6A)-containing mRNAs, promoting their demethylation by ALKBH5. Acts as an molecular adapter, which (1) promotes ALKBH5 recruitment to m6A-containing transcripts and (2) activates ALKBH5 demethylase activity by recruiting SENP1, leading to ALKBH5 deSUMOylation and subsequent activation. In Mus musculus (Mouse), this protein is RNA-binding protein 33.